A 323-amino-acid chain; its full sequence is tRNA U34 carboxymethyltransferase (323 aa).

Carboxy-S-adenosyl-L-methionine contacts are provided by residues K91, W105, K110, G130, 152–154 (DPT), 181–182 (IE), M196, Y200, and R315.

Belongs to the class I-like SAM-binding methyltransferase superfamily. CmoB family. Homotetramer.

It catalyses the reaction carboxy-S-adenosyl-L-methionine + 5-hydroxyuridine(34) in tRNA = 5-carboxymethoxyuridine(34) in tRNA + S-adenosyl-L-homocysteine + H(+). Catalyzes carboxymethyl transfer from carboxy-S-adenosyl-L-methionine (Cx-SAM) to 5-hydroxyuridine (ho5U) to form 5-carboxymethoxyuridine (cmo5U) at position 34 in tRNAs. The chain is tRNA U34 carboxymethyltransferase from Salmonella agona (strain SL483).